The primary structure comprises 172 residues: Translationally-controlled tumor protein (172 aa).

The 172-residue stretch at 1–172 (MIIYRDLISH…FKDGLEMEKC (172 aa)) folds into the TCTP domain. Phosphoserine occurs at positions 46 and 53. The residue at position 64 (serine 64) is a Phosphoserine; by PLK1. Residues 70 to 172 (VDIVMNHHLQ…FKDGLEMEKC (103 aa)) form a required for reduction of TSC22D1 protein stability region.

This sequence belongs to the TCTP family. Homodimer. Interacts with STEAP3. Interacts with TSC22D1; interaction results in the destabilization of TSC22D1 protein.

The protein localises to the cytoplasm. Functionally, involved in calcium binding and microtubule stabilization. Acts as a negative regulator of TSC22D1-mediated apoptosis, via interaction with and destabilization of TSC22D1 protein. The chain is Translationally-controlled tumor protein (Tpt1) from Mus musculus (Mouse).